A 307-amino-acid polypeptide reads, in one-letter code: Dihydroorotate dehydrogenase A (fumarate) (307 aa).

FMN is bound by residues Ser21 and 46-47 (KT). Residues Lys46, 70-74 (NSVGL), and Asn130 each bind substrate. Residue Asn130 participates in FMN binding. Catalysis depends on Cys133, which acts as the Nucleophile. FMN is bound by residues Lys168 and Ile194. 195–196 (NT) is a substrate binding site. Residues Gly220, 246-247 (GG), and 268-269 (GS) each bind FMN.

The protein belongs to the dihydroorotate dehydrogenase family. Type 1 subfamily. In terms of assembly, homodimer. It depends on FMN as a cofactor.

The protein resides in the cytoplasm. It carries out the reaction (S)-dihydroorotate + fumarate = orotate + succinate. It functions in the pathway pyrimidine metabolism; UMP biosynthesis via de novo pathway. Catalyzes the conversion of dihydroorotate to orotate with fumarate as the electron acceptor. This chain is Dihydroorotate dehydrogenase A (fumarate) (pyrD), found in Lactobacillus delbrueckii subsp. bulgaricus (strain ATCC 11842 / DSM 20081 / BCRC 10696 / JCM 1002 / NBRC 13953 / NCIMB 11778 / NCTC 12712 / WDCM 00102 / Lb 14).